Reading from the N-terminus, the 785-residue chain is Transcription factor Sp1 (785 aa).

Positions 1–93 (MSDQDHSMDE…PSQSGGTGEL (93 aa)) are disordered. Residue Ser-2 is modified to N-acetylserine. 2 positions are modified to phosphoserine: Ser-2 and Ser-7. The tract at residues 2–82 (SDQDHSMDEM…SPNENSNNSQ (81 aa)) is repressor domain. Lys-16 is covalently cross-linked (Glycyl lysine isopeptide (Lys-Gly) (interchain with G-Cter in SUMO); alternate). Residue Lys-16 forms a Glycyl lysine isopeptide (Lys-Gly) (interchain with G-Cter in SUMO2); alternate linkage. Residues 20-34 (GVGGNNGGNGNGGGA) are compositionally biased toward gly residues. At Ser-59 the chain carries Phosphoserine. A compositionally biased stretch (low complexity) spans 72–85 (ESPNENSNNSQGPS). Ser-101 is modified (phosphoserine; by ATM). The span at 109–123 (IISSSSGATPTSKEQ) shows a compositional bias: polar residues. The disordered stretch occupies residues 109–141 (IISSSSGATPTSKEQSGSSTNGSNGSESSKNRT). Residues 124 to 136 (SGSSTNGSNGSES) are compositionally biased toward low complexity. Residues 146-251 (QYVVAAAPNL…ANNVLSGQTQ (106 aa)) are transactivation domain A (Gln-rich). The tract at residues 261 to 495 (NGNITLLPVN…PMQGVSLGQT (235 aa)) is transactivation domain B (Gln-rich). A Phosphothreonine; by MAPK8 modification is found at Thr-278. A disordered region spans residues 329–395 (TTTTTSNMGI…KEGEQNQQTQ (67 aa)). Residues 342–357 (TTSGSSGTNSQGQTPQ) show a composition bias toward low complexity. A compositionally biased stretch (polar residues) spans 358–379 (RVSGLQGSDALNIQQNQTSGGS). Low complexity predominate over residues 381–395 (QAGQQKEGEQNQQTQ). A Phosphothreonine; by MAPK1 and MAPK3 modification is found at Thr-453. Positions 462–470 (VSWQTLQLQ) match the 9aaTAD motif. Ser-491 is a glycosylation site (O-linked (GlcNAc) serine). The transactivation domain C (highly charged) stretch occupies residues 496-610 (SSSNTTLTPI…REACTCPYCK (115 aa)). The interval 567–598 (LHGAGGDGIHDDTAGGEEGENSPDAQPQAGRR) is disordered. Ser-612 is subject to Phosphoserine; alternate. Ser-612 is a glycosylation site (O-linked (GlcNAc) serine; alternate). Positions 619–785 (DPGKKKQHIC…QSINISGNGF (167 aa)) are VZV IE62-binding. The segment at 626-650 (HICHIQGCGKVYGKTSHLRAHLRWH) adopts a C2H2-type 1 zinc-finger fold. Position 640 is a phosphothreonine; alternate (Thr-640). Thr-640 carries an O-linked (GlcNAc) threonine; alternate glycan. Residue Ser-641 is glycosylated (O-linked (GlcNAc) serine; alternate). Ser-641 is subject to Phosphoserine; by PKC/PRKCZ; alternate. Residue Thr-651 is modified to Phosphothreonine; by PKC/PRKCZ. A C2H2-type 2 zinc finger spans residues 656–680 (FMCTWSYCGKRFTRSDELQRHKRTH). Thr-668 bears the Phosphothreonine mark. The residue at position 670 (Ser-670) is a Phosphoserine; by PKC/PRKCZ. The residue at position 681 (Thr-681) is a Phosphothreonine; by PKC/PRKCZ. The C2H2-type 3 zinc-finger motif lies at 686-708 (FACPECPKRFMRSDHLSKHIKTH). Phosphoserine; alternate occurs at positions 698 and 702. Residues Ser-698 and Ser-702 are each glycosylated (O-linked (GlcNAc) serine; alternate). Lys-703 carries the post-translational modification N6-acetyllysine. Residues 708–785 (HQNKKGGPGV…QSINISGNGF (78 aa)) form a domain D region. At Thr-739 the chain carries Phosphothreonine; by MAPK1, MAPK3 and MAPK8.

It belongs to the Sp1 C2H2-type zinc-finger protein family. As to quaternary structure, interacts with ATF7IP, ATF7IP2, BAHD1, POGZ, HCFC1, AATF and PHC2. Interacts with HLTF; the interaction may be required for basal transcriptional activity of HLTF. Interacts (deacetylated form) with EP300; the interaction enhances gene expression. Interacts with HDAC1 and JUN. Interacts with ELF1; the interaction is inhibited by glycosylation of SP1. Interaction with NFYA; the interaction is inhibited by glycosylation of SP1. Interacts with ATF7IP and TBP. Interacts with MEIS2 isoform 4 and PBX1 isoform PBX1a. Interacts with EGR1. Interacts with SMARCA4/BRG1. Interacts with RNF112 in an oxidative stress-regulated manner. Interacts with ZBTB7A; ZBTB7A prevents the binding to GC-rich motifs in promoters and represses the transcriptional activity of SP1. Interacts with DDX3X; this interaction potentiates SP1-induced CDKN1A/WAF1/CIP1 transcription. Interacts with MSX1; the interaction may inhibit MSX1 autoinactivation. In terms of assembly, (Microbial infection) Interacts with varicella-zoster virus IE62 protein. (Microbial infection) Interacts with SV40 VP2/3 proteins. Interacts with SV40 major capsid protein VP1; this interaction leads to a cooperativity between the 2 proteins in DNA binding. As to quaternary structure, (Microbial infection) Interacts with HIV-1 Vpr; the interaction is inhibited by SP1 O-glycosylation. Phosphorylated on multiple serine and threonine residues. Phosphorylation is coupled to ubiquitination, sumoylation and proteolytic processing. Phosphorylation on Ser-59 enhances proteolytic cleavage. Phosphorylation on Ser-7 enhances ubiquitination and protein degradation. Hyperphosphorylation on Ser-101 in response to DNA damage has no effect on transcriptional activity. MAPK1/MAPK3-mediated phosphorylation on Thr-453 and Thr-739 enhances VEGF transcription but, represses FGF2-triggered PDGFR-alpha transcription. Also implicated in the repression of RECK by ERBB2. Hyperphosphorylated on Thr-278 and Thr-739 during mitosis by MAPK8 shielding SP1 from degradation by the ubiquitin-dependent pathway. Phosphorylated in the zinc-finger domain by calmodulin-activated PKCzeta. Phosphorylation on Ser-641 by PKCzeta is critical for TSA-activated LHR gene expression through release of its repressor, p107. Phosphorylation on Thr-668, Ser-670 and Thr-681 is stimulated by angiotensin II via the AT1 receptor inducing increased binding to the PDGF-D promoter. This phosphorylation is increased in injured artey wall. Ser-59 and Thr-681 can both be dephosphorylated by PP2A during cell-cycle interphase. Dephosphorylation on Ser-59 leads to increased chromatin association during interphase and increases the transcriptional activity. On insulin stimulation, sequentially glycosylated and phosphorylated on several C-terminal serine and threonine residues. Post-translationally, acetylated. Acetylation/deacetylation events affect transcriptional activity. Deacetylation leads to an increase in the expression of the 12(s)-lipooxygenase gene through recruitment of p300 to the promoter. Deacetylated by HDAC6 which leads to increased expression of ENG and positive regulation of angiogenesis. In terms of processing, ubiquitinated. Ubiquitination occurs on the C-terminal proteolytically-cleaved peptide and is triggered by phosphorylation. Sumoylated with SUMO1. Sumoylation modulates proteolytic cleavage of the N-terminal repressor domain. Sumoylation levels are attenuated during tumorigenesis. Phosphorylation mediates SP1 desumoylation. Post-translationally, proteolytic cleavage in the N-terminal repressor domain is prevented by sumoylation. The C-terminal cleaved product is susceptible to degradation. In terms of processing, O-glycosylated; Contains 8 N-acetylglucosamine side chains. Levels are controlled by insulin and the SP1 phosphorylation states. Insulin-mediated O-glycosylation locates SP1 to the nucleus, where it is sequentially deglycosylated and phosphorylated. O-glycosylation affects transcriptional activity through disrupting the interaction with a number of transcription factors including ELF1 and NFYA. Also inhibits interaction with the HIV1 promoter. Inhibited by peroxisomome proliferator receptor gamma (PPARgamma). In terms of tissue distribution, up-regulated in adenocarcinomas of the stomach (at protein level). Isoform 3 is ubiquitously expressed at low levels.

Its subcellular location is the nucleus. The protein resides in the cytoplasm. Functionally, transcription factor that can activate or repress transcription in response to physiological and pathological stimuli. Binds with high affinity to GC-rich motifs and regulates the expression of a large number of genes involved in a variety of processes such as cell growth, apoptosis, differentiation and immune responses. Highly regulated by post-translational modifications (phosphorylations, sumoylation, proteolytic cleavage, glycosylation and acetylation). Also binds the PDGFR-alpha G-box promoter. May have a role in modulating the cellular response to DNA damage. Implicated in chromatin remodeling. Plays an essential role in the regulation of FE65 gene expression. In complex with ATF7IP, maintains telomerase activity in cancer cells by inducing TERT and TERC gene expression. Isoform 3 is a stronger activator of transcription than isoform 1. Positively regulates the transcription of the core clock component BMAL1. Plays a role in the recruitment of SMARCA4/BRG1 on the c-FOS promoter. Plays a role in protecting cells against oxidative stress following brain injury by regulating the expression of RNF112. The protein is Transcription factor Sp1 (SP1) of Homo sapiens (Human).